A 34-amino-acid chain; its full sequence is uncharacterized protein (34 aa).

A helical transmembrane segment spans residues 10–30 (LIITSSFFAIAAVLVLSVLLI).

It localises to the membrane. This is an uncharacterized protein from Escherichia coli O6:H1 (strain CFT073 / ATCC 700928 / UPEC).